The primary structure comprises 122 residues: Thioredoxin H-type (122 aa).

The region spanning 2 to 118 is the Thioredoxin domain; it reads AAEEGVVIAC…IVKHVGATAA (117 aa). C40 and C43 are disulfide-bonded.

The protein localises to the cytoplasm. In terms of biological role, participates in various redox reactions through the reversible oxidation of the active center dithiol to a disulfide. The H form is known to activate a number of cytosolic enzymes. This Oryza sativa subsp. indica (Rice) protein is Thioredoxin H-type (TRXH).